The following is a 189-amino-acid chain: Putative 3-methyladenine DNA glycosylase (189 aa).

It belongs to the DNA glycosylase MPG family.

This chain is Putative 3-methyladenine DNA glycosylase (mag), found in Corynebacterium glutamicum (strain ATCC 13032 / DSM 20300 / JCM 1318 / BCRC 11384 / CCUG 27702 / LMG 3730 / NBRC 12168 / NCIMB 10025 / NRRL B-2784 / 534).